Here is a 365-residue protein sequence, read N- to C-terminus: MAVMAPRTLVLLLSGALALTQTWAGSHSMRYFYTSVSRPGRGEPRFIAVGYVDDTQFVRFDSDAASQRMEPRAPWIEQEEPEYWDGETRNMKARSQTDRVDLGTLRGYYNQSEDGSHTIQRMYGCDVGSDGRFLRGYQQDAYDGKDYIALNEDLRSWTAADMAAQITQRKWEAAHEAEQLRAYLEGTCVEWLRRYLENGKETLQLTDAPKTHMTHHPVSDHEAILRCWALSFYPAEITLTWQRDGEDQTQDTELVETRPAGDGTFQKWAAVVVPSGQEQRYTCHVQHEGLPKPLTLRWEPSSQPTIPIVGIIAGLVLFGAVIAGAVVAAVRWRRKSSDRKGGSYSQAASSDSAQGSDVSLTACKV.

The signal sequence occupies residues 1–24 (MAVMAPRTLVLLLSGALALTQTWA). The segment at 25-114 (GSHSMRYFYT…LRGYYNQSED (90 aa)) is alpha-1. At 25-308 (GSHSMRYFYT…EPSSQPTIPI (284 aa)) the chain is on the extracellular side. Asn-110 carries an N-linked (GlcNAc...) asparagine glycan. The alpha-2 stretch occupies residues 115–206 (GSHTIQRMYG…ENGKETLQLT (92 aa)). Cystine bridges form between Cys-125–Cys-188 and Cys-227–Cys-283. The tract at residues 207–298 (DAPKTHMTHH…GLPKPLTLRW (92 aa)) is alpha-3. Positions 209–295 (PKTHMTHHPV…QHEGLPKPLT (87 aa)) constitute an Ig-like C1-type domain. The tract at residues 299–308 (EPSSQPTIPI) is connecting peptide. Residues 309–332 (VGIIAGLVLFGAVIAGAVVAAVRW) form a helical membrane-spanning segment. Topologically, residues 333–365 (RRKSSDRKGGSYSQAASSDSAQGSDVSLTACKV) are cytoplasmic. A disordered region spans residues 338 to 365 (DRKGGSYSQAASSDSAQGSDVSLTACKV). Over residues 342-359 (GSYSQAASSDSAQGSDVS) the composition is skewed to low complexity. At Ser-343 the chain carries Phosphoserine. At Tyr-344 the chain carries Phosphotyrosine. Residues Ser-345, Ser-349, Ser-350, Ser-352, Ser-356, and Ser-359 each carry the phosphoserine modification.

The protein belongs to the MHC class I family. Heterodimer of an alpha chain and a beta chain (beta-2-microglobulin).

Its subcellular location is the membrane. In terms of biological role, involved in the presentation of foreign antigens to the immune system. The protein is Class I histocompatibility antigen, Gogo-A*0401 alpha chain of Gorilla gorilla gorilla (Western lowland gorilla).